Consider the following 517-residue polypeptide: Glutamyl-tRNA(Gln) amidotransferase subunit A, mitochondrial (517 aa).

Active-site charge relay system residues include Lys-58 and Ser-131. The disordered stretch occupies residues 106-132 (FGMGTHSTHSAHGPVASPAGRSAGGSS). Ser-155 (acyl-ester intermediate) is an active-site residue.

Belongs to the amidase family. GatA subfamily. As to quaternary structure, subunit of the heterotrimeric GatCAB amidotransferase (AdT) complex, composed of A, B and C subunits.

The protein resides in the mitochondrion. The enzyme catalyses L-glutamyl-tRNA(Gln) + L-glutamine + ATP + H2O = L-glutaminyl-tRNA(Gln) + L-glutamate + ADP + phosphate + H(+). Allows the formation of correctly charged Gln-tRNA(Gln) through the transamidation of misacylated Glu-tRNA(Gln) in the mitochondria. The reaction takes place in the presence of glutamine and ATP through an activated gamma-phospho-Glu-tRNA(Gln). In Pyricularia oryzae (strain 70-15 / ATCC MYA-4617 / FGSC 8958) (Rice blast fungus), this protein is Glutamyl-tRNA(Gln) amidotransferase subunit A, mitochondrial.